A 255-amino-acid polypeptide reads, in one-letter code: Homeobox protein Hox-D4 (255 aa).

The tract at residues 31-128 (EQGADYYGGG…KQPPPGTALK (98 aa)) is disordered. The segment covering 94 to 109 (EPCPAPPAPPPAPLPG) has biased composition (pro residues). The Antp-type hexapeptide signature appears at 133-138 (VYPWMK). The homeobox DNA-binding region spans 154–213 (PKRSRTAYTRQQVLELEKEFHFNRYLTRRRRIEIAHTLCLSERQIKIWFQNRRMKWKKDH). Residues 212–255 (DHKLPNTKGRSSSSSSSSSCSSSVAPSQHLQPMAKDHHTDLTTL) are disordered. A compositionally biased stretch (low complexity) spans 222-234 (SSSSSSSSSCSSS). Residues 245–255 (AKDHHTDLTTL) show a composition bias toward basic and acidic residues.

Belongs to the Antp homeobox family. Deformed subfamily. In terms of assembly, forms a DNA-binding heterodimer with transcription factor PBX1.

It localises to the nucleus. Functionally, sequence-specific transcription factor which is part of a developmental regulatory system that provides cells with specific positional identities on the anterior-posterior axis. In Gorilla gorilla gorilla (Western lowland gorilla), this protein is Homeobox protein Hox-D4 (HOXD4).